The primary structure comprises 95 residues: Large ribosomal subunit protein bL25 (95 aa).

It belongs to the bacterial ribosomal protein bL25 family. In terms of assembly, part of the 50S ribosomal subunit; part of the 5S rRNA/L5/L18/L25 subcomplex. Contacts the 5S rRNA. Binds to the 5S rRNA independently of L5 and L18.

This is one of the proteins that binds to the 5S RNA in the ribosome where it forms part of the central protuberance. The polypeptide is Large ribosomal subunit protein bL25 (Shewanella pealeana (strain ATCC 700345 / ANG-SQ1)).